Reading from the N-terminus, the 186-residue chain is UPF0461 protein C5orf24 homolog (186 aa).

A compositionally biased stretch (polar residues) spans 60-69; that stretch reads NETHLQTSTS. Residues 60–140 are disordered; it reads NETHLQTSTS…AAGYKVSPGR (81 aa). Basic residues predominate over residues 78–92; the sequence is LKKKKNLGRSGKRGR. The span at 94-107 shows a compositional bias: polar residues; that stretch reads SGTTKSAGYRTSTG.

This sequence belongs to the UPF0461 family.

The chain is UPF0461 protein C5orf24 homolog from Xenopus tropicalis (Western clawed frog).